A 239-amino-acid chain; its full sequence is tRNA (guanine-N(7)-)-methyltransferase (239 aa).

S-adenosyl-L-methionine is bound by residues E68, E93, D120, and D143. D143 is an active-site residue. Substrate-binding positions include K147, D180, and 217–220; that span reads TKFE.

The protein belongs to the class I-like SAM-binding methyltransferase superfamily. TrmB family.

It carries out the reaction guanosine(46) in tRNA + S-adenosyl-L-methionine = N(7)-methylguanosine(46) in tRNA + S-adenosyl-L-homocysteine. Its pathway is tRNA modification; N(7)-methylguanine-tRNA biosynthesis. Its function is as follows. Catalyzes the formation of N(7)-methylguanine at position 46 (m7G46) in tRNA. This chain is tRNA (guanine-N(7)-)-methyltransferase, found in Vibrio cholerae serotype O1 (strain ATCC 39541 / Classical Ogawa 395 / O395).